The primary structure comprises 561 residues: Arginine--tRNA ligase (561 aa).

The 'HIGH' region motif lies at 123–133; it reads PNIAKDMHVGH.

Belongs to the class-I aminoacyl-tRNA synthetase family. Monomer.

Its subcellular location is the cytoplasm. The enzyme catalyses tRNA(Arg) + L-arginine + ATP = L-arginyl-tRNA(Arg) + AMP + diphosphate. The chain is Arginine--tRNA ligase (argS) from Chlamydia pneumoniae (Chlamydophila pneumoniae).